The primary structure comprises 152 residues: Transcriptional repressor NrdR (152 aa).

A zinc finger spans residues 3-34 (CPACQHNGTRVLDSRPVDEGRSIRRRRECESC). Positions 49 to 139 (LIVVKKEGIR…VYRQFKDINV (91 aa)) constitute an ATP-cone domain.

It belongs to the NrdR family. The cofactor is Zn(2+).

Functionally, negatively regulates transcription of bacterial ribonucleotide reductase nrd genes and operons by binding to NrdR-boxes. This is Transcriptional repressor NrdR from Bacillus licheniformis (strain ATCC 14580 / DSM 13 / JCM 2505 / CCUG 7422 / NBRC 12200 / NCIMB 9375 / NCTC 10341 / NRRL NRS-1264 / Gibson 46).